The primary structure comprises 454 residues: G-protein coupled receptor 39 (454 aa).

The Extracellular portion of the chain corresponds to 1-34 (MASPSHPSRDCSQVIDHSHVPEFEVATWIKITLI). 2 cysteine pairs are disulfide-bonded: Cys-11–Cys-191 and Cys-108–Cys-210. The Zn(2+) site is built by His-17 and His-19. A helical membrane pass occupies residues 35–55 (LVYLVIFVVGILGNSVTIRVT). The Cytoplasmic portion of the chain corresponds to 56–69 (QVLQKKGYLQKEVT). The chain crosses the membrane as a helical span at residues 70–89 (DHMVSLACSDILVFLIGMPM). Residues 90 to 109 (EFYSIIWNPLTTPSYTVSCK) lie on the Extracellular side of the membrane. Residues 110 to 131 (VHTFLFEACSYATLLHVLTLSF) traverse the membrane as a helical segment. Over 132–151 (ERYIAICHPFRYKAMSGPCQ) the chain is Cytoplasmic. The chain crosses the membrane as a helical span at residues 152-172 (VKLLIGFVWVTSALVALPLLF). Topologically, residues 173–217 (AMGVEYPLVNVPSHRGLICNRSRTRHQEQPESSNMSICTNLSSRW) are extracellular. N-linked (GlcNAc...) asparagine glycosylation is found at Asn-192, Asn-206, and Asn-212. A helical transmembrane segment spans residues 218-242 (TVFQSSIFSAFVVYLVVLVSVAFMC). Residues 243–283 (WSMMQVLRRSKQGTLAAQGQQLQLRKLESQESRSARRQTII) are Cytoplasmic-facing. The helical transmembrane segment at 284-305 (FLELIVVTLAVCWMPNQVRRIM) threads the bilayer. Over 306 to 323 (AAAKPKHDWTKSYFRAYM) the chain is Extracellular. A helical transmembrane segment spans residues 324–344 (ILLPFSDTFFYLSSVVNPLLY). The Cytoplasmic portion of the chain corresponds to 345–454 (NVSSQQFRSV…TRNGFQEHEV (110 aa)). Ser-397 is modified (phosphoserine). The segment at 415 to 454 (HSEAKPESKPQELSCESPEPNSERKPANPATRNGFQEHEV) is disordered.

It belongs to the G-protein coupled receptor 1 family. In terms of assembly, interacts with HTR1A. Interacts with GALR1. In terms of tissue distribution, detected in liver, kidney, abomasum, uterus, small intestine and colon.

The protein resides in the cell membrane. Its function is as follows. Zinc-sensing receptor that can sense changes in extracellular Zn(2+), mediate Zn(2+) signal transmission, and participates in the regulation of numerous physiological processes including glucose homeostasis regulation, gastrointestinal mobility, hormone secretion and cell death. Activation by Zn(2+) in keratinocytes increases the intracellular concentration of Ca(2+) and activates the ERK/MAPK and PI3K/AKT signaling pathways leading to epithelial repair. Plays an essential role in normal wound healing by inducing the production of cytokines including the major inflammatory cytokine IL6 via the PKC/MAPK/CEBPB pathway. Regulates adipose tissue metabolism, especially lipolysis, and regulates the function of lipases, such as hormone-sensitive lipase and adipose triglyceride lipase. Plays a role in the inhibition of cell death and protects against oxidative, endoplasmic reticulum and mitochondrial stress by inducing secretion of the cytoprotective pigment epithelium-derived growth factor (PEDF) and probably other protective transcripts in a GNA13/RHOA/SRE-dependent manner. Forms dynamic heteroreceptor complexes with HTR1A and GALR1 depending on cell type or specific physiological states, resulting in signaling diversity: HTR1A-GPR39 shows additive increase in signaling along the serum response element (SRE) and NF-kappa-B pathways while GALR1 acts as an antagonist blocking SRE. The polypeptide is G-protein coupled receptor 39 (GPR39) (Bos taurus (Bovine)).